A 76-amino-acid chain; its full sequence is DNA-directed RNA polymerase subunit epsilon (76 aa).

Belongs to the RNA polymerase subunit epsilon family. RNAP is composed of a core of 2 alpha, a beta and a beta' subunit. The core is associated with a delta subunit, and at least one of epsilon or omega. When a sigma factor is associated with the core the holoenzyme is formed, which can initiate transcription.

It catalyses the reaction RNA(n) + a ribonucleoside 5'-triphosphate = RNA(n+1) + diphosphate. Functionally, a non-essential component of RNA polymerase (RNAP). The sequence is that of DNA-directed RNA polymerase subunit epsilon from Streptococcus mutans serotype c (strain ATCC 700610 / UA159).